A 434-amino-acid polypeptide reads, in one-letter code: Enolase (434 aa).

Gln163 provides a ligand contact to (2R)-2-phosphoglycerate. Glu205 serves as the catalytic Proton donor. Asp243, Glu291, and Asp318 together coordinate Mg(2+). (2R)-2-phosphoglycerate is bound by residues Lys343, Arg372, Ser373, and Lys394. Catalysis depends on Lys343, which acts as the Proton acceptor.

Belongs to the enolase family. It depends on Mg(2+) as a cofactor.

The protein localises to the cytoplasm. It is found in the secreted. It localises to the cell surface. The enzyme catalyses (2R)-2-phosphoglycerate = phosphoenolpyruvate + H2O. Its pathway is carbohydrate degradation; glycolysis; pyruvate from D-glyceraldehyde 3-phosphate: step 4/5. Catalyzes the reversible conversion of 2-phosphoglycerate (2-PG) into phosphoenolpyruvate (PEP). It is essential for the degradation of carbohydrates via glycolysis. The protein is Enolase of Fusobacterium nucleatum subsp. nucleatum (strain ATCC 25586 / DSM 15643 / BCRC 10681 / CIP 101130 / JCM 8532 / KCTC 2640 / LMG 13131 / VPI 4355).